The primary structure comprises 109 residues: Staphostatin B (109 aa).

The binds to staphopain B stretch occupies residues isoleucine 97–arginine 101.

The protein belongs to the protease inhibitor I57 (SspC) family. In terms of assembly, forms a stable non-covalent complex with prematurely activated/folded SspB.

The protein localises to the cytoplasm. Functionally, specifically inhibits the cysteine protease staphopain B (SspB) by blocking the active site of the enzyme. Probably required to protect cytoplasmic proteins from being degraded by prematurely activated/folded prostaphopain B. Also involved in growth capacity, viability and bacterial morphology. The sequence is that of Staphostatin B (sspC) from Staphylococcus aureus (strain MRSA252).